The following is a 662-amino-acid chain: Glycogen debranching enzyme (662 aa).

The active-site Nucleophile is Asp338. Residue Glu373 is the Proton donor of the active site.

It belongs to the glycosyl hydrolase 13 family.

The enzyme catalyses Hydrolysis of (1-&gt;6)-alpha-D-glucosidic linkages to branches with degrees of polymerization of three or four glucose residues in limit dextrin.. The protein operates within glycan degradation; glycogen degradation. Functionally, removes maltotriose and maltotetraose chains that are attached by 1,6-alpha-linkage to the limit dextrin main chain, generating a debranched limit dextrin. This Yersinia pseudotuberculosis serotype IB (strain PB1/+) protein is Glycogen debranching enzyme.